The sequence spans 414 residues: Na(+)-translocating NADH-quinone reductase subunit B (414 aa).

A run of 4 helical transmembrane segments spans residues 56-76, 82-104, 129-149, and 164-184; these read IMIMVWLAVFPAMFWGMYNVG, ALNHLYSGAELATVISGNWHYWL, FLPIYATVFLVGGFWEVLFCM, and ILFALIVPPTLPLWQAALGIT. At Thr236 the chain carries FMN phosphoryl threonine. The next 5 helical transmembrane spans lie at 275–295, 297–317, 325–345, 358–378, and 381–401; these read VSTLALAIGAAFIVYMGIASW, IIAGVMVGMIAISTLFNVIGS, MPWHWHLVLGGFAFGMFFMAT, WAYGILIGAMCVMIRVVNPAY, and GMMLAILFANLFAPLFDHIVI.

It belongs to the NqrB/RnfD family. In terms of assembly, composed of six subunits; NqrA, NqrB, NqrC, NqrD, NqrE and NqrF. It depends on FMN as a cofactor.

Its subcellular location is the cell inner membrane. The catalysed reaction is a ubiquinone + n Na(+)(in) + NADH + H(+) = a ubiquinol + n Na(+)(out) + NAD(+). In terms of biological role, NQR complex catalyzes the reduction of ubiquinone-1 to ubiquinol by two successive reactions, coupled with the transport of Na(+) ions from the cytoplasm to the periplasm. NqrA to NqrE are probably involved in the second step, the conversion of ubisemiquinone to ubiquinol. The sequence is that of Na(+)-translocating NADH-quinone reductase subunit B from Vibrio anguillarum (Listonella anguillarum).